We begin with the raw amino-acid sequence, 254 residues long: Bacteriorhodopsin-I (254 aa).

A propeptide spanning residues 1-6 is cleaved from the precursor; it reads MSQLAL. Q7 carries the pyrrolidone carboxylic acid modification. A run of 7 helical transmembrane segments spans residues 16–36, 51–71, 91–111, 116–136, 144–164, 185–205, and 212–232; these read EGIW…YFIA, VITI…FFGF, YADW…LAGA, IGAL…ATLT, AFWT…VAVF, IILV…EGLA, and ETLL…FILL. K224 carries the post-translational modification N6-(retinylidene)lysine.

This sequence belongs to the archaeal/bacterial/fungal opsin family. In terms of processing, the covalent binding of retinal to the apoprotein, bacterioopsin, generates bacteriorhodopsin.

It localises to the cell membrane. Light-driven proton pump. The protein is Bacteriorhodopsin-I (bop1) of Haloquadratum walsbyi (strain DSM 16854 / JCM 12705 / C23).